Reading from the N-terminus, the 533-residue chain is Minor capsid protein L2 (533 aa).

Positions 1-10 match the Nuclear localization signal motif; sequence MARARRVKRA. The cysteines at positions 19 and 25 are disulfide-linked. Residues 525-532 carry the Nuclear localization signal motif; it reads TRKRKRKY.

It belongs to the papillomaviridae L2 protein family. In terms of assembly, interacts with major capsid protein L1. Interacts with E2; this interaction inhibits E2 transcriptional activity but not the DNA replication function E2. Interacts with host GADD45GIP1. Interacts with host HSPA8; this interaction is required for L2 nuclear translocation. Interacts with host importins KPNB2 and KPNB3. Forms a complex with importin alpha2-beta1 heterodimers via interaction with the importin alpha2 adapter. Interacts with host DYNLT1; this interaction is essential for virus intracellular transport during entry. Interacts (via C-terminus) with host retromer subunits VPS35 and VPS29. Highly phosphorylated.

The protein resides in the virion. It is found in the host nucleus. Its subcellular location is the host early endosome. It localises to the host Golgi apparatus. Functionally, minor protein of the capsid that localizes along the inner surface of the virion, within the central cavities beneath the L1 pentamers. Plays a role in capsid stabilization through interaction with the major capsid protein L1. Once the virion enters the host cell, L2 escorts the genomic DNA into the nucleus by promoting escape from the endosomal compartments and traffic through the host Golgi network. Mechanistically, the C-terminus of L2 possesses a cell-penetrating peptide that protudes from the host endosome, interacts with host cytoplasmic retromer cargo and thereby mediates the capsid delivery to the host trans-Golgi network. Plays a role through its interaction with host dynein in the intracellular microtubule-dependent transport of viral capsid toward the nucleus. Mediates the viral genome import into the nucleus through binding to host importins. Once within the nucleus, L2 localizes viral genomes to host PML bodies in order to activate early gene expression for establishment of infection. Later on, promotes late gene expression by interacting with the viral E2 protein and by inhibiting its transcriptional activation functions. During virion assembly, encapsidates the genome by direct interaction with the viral DNA. This Homo sapiens (Human) protein is Minor capsid protein L2.